The sequence spans 553 residues: Protein spartin (553 aa).

Residues isoleucine 15–valine 96 enclose the MIT domain. The disordered stretch occupies residues aspartate 105 to asparagine 130. Positions glutamate 113–arginine 123 are enriched in basic and acidic residues. The region spanning isoleucine 325–lysine 509 is the Senescence domain.

In terms of assembly, interacts with Eps-15 (via C-terminal region); the interaction is required for spartin localization to the NMJ presynaptic membrane. Expressed in larval brain, ventral nerve cord and neuropil (at protein level).

The protein localises to the presynaptic cell membrane. It localises to the early endosome. The protein resides in the lipid droplet. Functionally, during postembryonic development, functions with endocytic adapter Eps-15 in neurons to restrain synaptic growth, by inhibiting BMP signaling, and to control synaptic endocytosis. Required presynaptically for neuromuscular junction (NMJ) neurotransmission. Inhibits neuronal BMP signaling by promoting endocytic internalization and subsequent endosomal trafficking of the BMP receptor wit. In this way, regulates the Fmr1 translational regulator controlling Futsch expression to modulate neuronal microtubule stability, which controls both synaptogenesis and neuronal survival. The polypeptide is Protein spartin (Drosophila melanogaster (Fruit fly)).